The chain runs to 123 residues: Ribosome-binding factor A (123 aa).

It belongs to the RbfA family. In terms of assembly, monomer. Binds 30S ribosomal subunits, but not 50S ribosomal subunits or 70S ribosomes.

It is found in the cytoplasm. In terms of biological role, one of several proteins that assist in the late maturation steps of the functional core of the 30S ribosomal subunit. Associates with free 30S ribosomal subunits (but not with 30S subunits that are part of 70S ribosomes or polysomes). Required for efficient processing of 16S rRNA. May interact with the 5'-terminal helix region of 16S rRNA. This Lactobacillus gasseri (strain ATCC 33323 / DSM 20243 / BCRC 14619 / CIP 102991 / JCM 1131 / KCTC 3163 / NCIMB 11718 / NCTC 13722 / AM63) protein is Ribosome-binding factor A.